A 200-amino-acid polypeptide reads, in one-letter code: Adenylate kinase (200 aa).

ATP is bound at residue 11 to 16 (GAGKGT). The segment at 31–60 (STGDIFRQNIKDRTELGQQVQALVDAGNYV) is NMP. AMP-binding positions include Thr32, Arg37, 58 to 60 (NYV), 86 to 89 (GYPR), and Gln93. The segment at 127–137 (RRAAEQGRADD) is LID. ATP is bound at residue Arg128. AMP is bound by residues Arg134 and Arg145. Gly173 contributes to the ATP binding site.

This sequence belongs to the adenylate kinase family. As to quaternary structure, monomer.

It localises to the cytoplasm. It catalyses the reaction AMP + ATP = 2 ADP. It functions in the pathway purine metabolism; AMP biosynthesis via salvage pathway; AMP from ADP: step 1/1. Functionally, catalyzes the reversible transfer of the terminal phosphate group between ATP and AMP. Plays an important role in cellular energy homeostasis and in adenine nucleotide metabolism. In Clavibacter michiganensis subsp. michiganensis (strain NCPPB 382), this protein is Adenylate kinase.